The following is an 81-amino-acid chain: Photosystem I iron-sulfur center (81 aa).

2 4Fe-4S ferredoxin-type domains span residues 2–31 (SHSV…MIPW) and 39–68 (IASA…VRVY). C11, C14, C17, C21, C48, C51, C54, and C58 together coordinate [4Fe-4S] cluster.

As to quaternary structure, the eukaryotic PSI reaction center is composed of at least 11 subunits. It depends on [4Fe-4S] cluster as a cofactor.

The protein localises to the plastid. It localises to the chloroplast thylakoid membrane. The enzyme catalyses reduced [plastocyanin] + hnu + oxidized [2Fe-2S]-[ferredoxin] = oxidized [plastocyanin] + reduced [2Fe-2S]-[ferredoxin]. In terms of biological role, apoprotein for the two 4Fe-4S centers FA and FB of photosystem I (PSI); essential for photochemical activity. FB is the terminal electron acceptor of PSI, donating electrons to ferredoxin. The C-terminus interacts with PsaA/B/D and helps assemble the protein into the PSI complex. Required for binding of PsaD and PsaE to PSI. PSI is a plastocyanin-ferredoxin oxidoreductase, converting photonic excitation into a charge separation, which transfers an electron from the donor P700 chlorophyll pair to the spectroscopically characterized acceptors A0, A1, FX, FA and FB in turn. This Vitis vinifera (Grape) protein is Photosystem I iron-sulfur center.